The chain runs to 157 residues: Transcription elongation factor GreA (157 aa).

The protein belongs to the GreA/GreB family.

Functionally, necessary for efficient RNA polymerase transcription elongation past template-encoded arresting sites. The arresting sites in DNA have the property of trapping a certain fraction of elongating RNA polymerases that pass through, resulting in locked ternary complexes. Cleavage of the nascent transcript by cleavage factors such as GreA or GreB allows the resumption of elongation from the new 3'terminus. GreA releases sequences of 2 to 3 nucleotides. This Brucella anthropi (strain ATCC 49188 / DSM 6882 / CCUG 24695 / JCM 21032 / LMG 3331 / NBRC 15819 / NCTC 12168 / Alc 37) (Ochrobactrum anthropi) protein is Transcription elongation factor GreA.